We begin with the raw amino-acid sequence, 313 residues long: Formimidoylglutamase (313 aa).

Mn(2+) is bound by residues histidine 130, aspartate 155, histidine 157, aspartate 159, aspartate 241, and aspartate 243.

The protein belongs to the arginase family. The cofactor is Mn(2+).

The catalysed reaction is N-formimidoyl-L-glutamate + H2O = formamide + L-glutamate. The protein operates within amino-acid degradation; L-histidine degradation into L-glutamate; L-glutamate from N-formimidoyl-L-glutamate (hydrolase route): step 1/1. In terms of biological role, catalyzes the conversion of N-formimidoyl-L-glutamate to L-glutamate and formamide. The protein is Formimidoylglutamase of Salmonella enteritidis PT4 (strain P125109).